The following is a 385-amino-acid chain: Succinate--CoA ligase [ADP-forming] subunit beta (385 aa).

The ATP-grasp domain occupies 9–244; the sequence is KEVLRKYGVS…LDEEDPKEIE (236 aa). Residues K46, 53–55, E99, C102, and E107 each bind ATP; that span reads GRG. N199 and D213 together coordinate Mg(2+). At S220 the chain carries Phosphoserine. Substrate is bound by residues N264 and 321-323; that span reads GIM.

The protein belongs to the succinate/malate CoA ligase beta subunit family. As to quaternary structure, heterotetramer of two alpha and two beta subunits. Interacts with BrxC. Mg(2+) serves as cofactor.

The enzyme catalyses succinate + ATP + CoA = succinyl-CoA + ADP + phosphate. It carries out the reaction GTP + succinate + CoA = succinyl-CoA + GDP + phosphate. It participates in carbohydrate metabolism; tricarboxylic acid cycle; succinate from succinyl-CoA (ligase route): step 1/1. Its function is as follows. Succinyl-CoA synthetase functions in the citric acid cycle (TCA), coupling the hydrolysis of succinyl-CoA to the synthesis of either ATP or GTP and thus represents the only step of substrate-level phosphorylation in the TCA. The beta subunit provides nucleotide specificity of the enzyme and binds the substrate succinate, while the binding sites for coenzyme A and phosphate are found in the alpha subunit. The chain is Succinate--CoA ligase [ADP-forming] subunit beta from Bacillus subtilis (strain 168).